Reading from the N-terminus, the 297-residue chain is Acetyl-coenzyme A carboxylase carboxyl transferase subunit beta (297 aa).

The region spanning 27–296 (LWHKCPSCEA…PEQAREAAAV (270 aa)) is the CoA carboxyltransferase N-terminal domain. Cys31, Cys34, Cys50, and Cys53 together coordinate Zn(2+). The C4-type zinc finger occupies 31-53 (CPSCEAVLYRPELEKTLDVCPKC).

This sequence belongs to the AccD/PCCB family. As to quaternary structure, acetyl-CoA carboxylase is a heterohexamer composed of biotin carboxyl carrier protein (AccB), biotin carboxylase (AccC) and two subunits each of ACCase subunit alpha (AccA) and ACCase subunit beta (AccD). Requires Zn(2+) as cofactor.

It is found in the cytoplasm. It carries out the reaction N(6)-carboxybiotinyl-L-lysyl-[protein] + acetyl-CoA = N(6)-biotinyl-L-lysyl-[protein] + malonyl-CoA. It participates in lipid metabolism; malonyl-CoA biosynthesis; malonyl-CoA from acetyl-CoA: step 1/1. Its function is as follows. Component of the acetyl coenzyme A carboxylase (ACC) complex. Biotin carboxylase (BC) catalyzes the carboxylation of biotin on its carrier protein (BCCP) and then the CO(2) group is transferred by the transcarboxylase to acetyl-CoA to form malonyl-CoA. This Pseudomonas putida (strain GB-1) protein is Acetyl-coenzyme A carboxylase carboxyl transferase subunit beta.